Here is a 396-residue protein sequence, read N- to C-terminus: Elongation factor Tu (396 aa).

In terms of domain architecture, tr-type G spans 10–205 (KPHVNIGTIG…AVDESIPDPV (196 aa)). The interval 19 to 26 (GHVDHGKT) is G1. 19–26 (GHVDHGKT) serves as a coordination point for GTP. Residue Thr26 coordinates Mg(2+). Residues 62-66 (GITIN) are G2. Positions 83-86 (DAPG) are G3. Residues 83 to 87 (DAPGH) and 138 to 141 (NKAD) contribute to the GTP site. The tract at residues 138-141 (NKAD) is G4. The segment at 175–177 (SAL) is G5.

Belongs to the TRAFAC class translation factor GTPase superfamily. Classic translation factor GTPase family. EF-Tu/EF-1A subfamily. As to quaternary structure, monomer.

The protein resides in the cytoplasm. It catalyses the reaction GTP + H2O = GDP + phosphate + H(+). Its function is as follows. GTP hydrolase that promotes the GTP-dependent binding of aminoacyl-tRNA to the A-site of ribosomes during protein biosynthesis. This is Elongation factor Tu from Mycobacterium bovis (strain ATCC BAA-935 / AF2122/97).